Here is a 79-residue protein sequence, read N- to C-terminus: UPF0154 protein SSP1415 (79 aa).

Residues 4 to 24 (WLAIVLIVLALILGLVGGFFL) traverse the membrane as a helical segment.

It belongs to the UPF0154 family.

The protein resides in the membrane. The protein is UPF0154 protein SSP1415 of Staphylococcus saprophyticus subsp. saprophyticus (strain ATCC 15305 / DSM 20229 / NCIMB 8711 / NCTC 7292 / S-41).